Reading from the N-terminus, the 314-residue chain is Probable tRNA pseudouridine synthase B (314 aa).

Residues 1 to 10 (MATRGRHRSR) show a composition bias toward basic residues. The segment at 1 to 30 (MATRGRHRSRTSGTSSEPMTLRAPPDERDL) is disordered. Aspartate 72 acts as the Nucleophile in catalysis. The 78-residue stretch at 237 to 314 (LPRVTIAPSA…LVVELDRMLV (78 aa)) folds into the PUA domain.

Belongs to the pseudouridine synthase TruB family. Type 2 subfamily.

It catalyses the reaction uridine(55) in tRNA = pseudouridine(55) in tRNA. Functionally, could be responsible for synthesis of pseudouridine from uracil-55 in the psi GC loop of transfer RNAs. This Haloarcula marismortui (strain ATCC 43049 / DSM 3752 / JCM 8966 / VKM B-1809) (Halobacterium marismortui) protein is Probable tRNA pseudouridine synthase B.